We begin with the raw amino-acid sequence, 1760 residues long: Cilia- and flagella-associated protein 44 (1760 aa).

5 WD repeats span residues glycine 119–arginine 160, cysteine 163–lysine 202, leucine 213–alanine 251, cysteine 276–glycine 315, and phenylalanine 388–lysine 427. Basic and acidic residues predominate over residues arginine 1155–alanine 1165. Residues arginine 1155–serine 1224 form a disordered region. Positions proline 1181 to alanine 1190 are enriched in polar residues. A compositionally biased stretch (basic and acidic residues) spans alanine 1194 to lysine 1205. Residues tyrosine 1348–glutamate 1389 are a coiled coil. Residues histidine 1420 to glutamate 1444 form a disordered region. A compositionally biased stretch (acidic residues) spans glycine 1425–glutamate 1444.

Belongs to the CFAP44 family.

It localises to the cell projection. The protein localises to the cilium. The protein resides in the flagellum. It is found in the cytoplasm. Its subcellular location is the cytoskeleton. It localises to the flagellum axoneme. In terms of biological role, flagellar protein involved in flagellum axoneme organization and function. The sequence is that of Cilia- and flagella-associated protein 44 from Trypanosoma brucei brucei (strain 927/4 GUTat10.1).